The primary structure comprises 80 residues: Defensin-like protein 204 (80 aa).

The first 29 residues, 1 to 29 (MAKTFSSICFTTLLLVVLFISTEIPKSEA), serve as a signal peptide directing secretion. 3 cysteine pairs are disulfide-bonded: cysteine 43–cysteine 64, cysteine 48–cysteine 73, and cysteine 52–cysteine 75.

This sequence belongs to the DEFL family.

It localises to the secreted. The protein is Defensin-like protein 204 of Arabidopsis thaliana (Mouse-ear cress).